Here is a 937-residue protein sequence, read N- to C-terminus: Outer membrane usher protein CS3-2 (937 aa).

This sequence belongs to the fimbrial export usher family. A 97 kDa form of the protein is thought to be due to post-translational processing of isoform 104 kDa.

Its subcellular location is the cell outer membrane. These proteins are essential for the biogenesis of mature CS3 pili, but not for synthesis of the CS3 pilin subunit. In Escherichia coli, this protein is Outer membrane usher protein CS3-2.